Reading from the N-terminus, the 287-residue chain is Cyclopropane mycolic acid synthase 3 (287 aa).

S-adenosyl-L-methionine-binding positions include 33–34, 68–76, 94–99, and 123–124; these read YS, LLDIGCGWG, TLSENQ, and WE. Residue Cys269 is part of the active site.

The protein belongs to the CFA/CMAS family. As to quaternary structure, homodimer.

It localises to the cytoplasm. The catalysed reaction is a 1-acyl-2-(9Z)-enoyl-sn-glycero-3-phospholipid + S-adenosyl-L-methionine = a 1-acyl-2-(9-cyclopronane)-acyl-sn-glycero-3-phospholipid + S-adenosyl-L-homocysteine + H(+). It participates in lipid metabolism; mycolic acid biosynthesis. Its function is as follows. Involved in the phagosome maturation block (PMB). Catalyzes the conversion of a double bond to a cyclopropane ring at the proximal position of an alpha mycolic acid via the transfer of a methylene group from S-adenosyl-L-methionine. It can use cis, cis 11,14-eicosadienoic acid and linoelaidic acid as substrate. Cyclopropanated mycolic acids are key factors participating in cell envelope permeability, host immunomodulation and persistence. In Mycobacterium tuberculosis (strain CDC 1551 / Oshkosh), this protein is Cyclopropane mycolic acid synthase 3 (pcaA).